Consider the following 298-residue polypeptide: Protoheme IX farnesyltransferase (298 aa).

A run of 9 helical transmembrane segments spans residues 16 to 36 (VVAL…PDMP), 45 to 65 (ALGF…NQLL), 93 to 113 (VFAG…VNVI), 114 to 134 (TAVL…VYLK), 141 to 161 (IVIG…AVTG), 172 to 192 (SLLV…LAIF), 223 to 243 (VLLA…VFYL), 244 to 264 (GGAV…LNPP), and 277 to 297 (IVYL…LPWV).

The protein belongs to the UbiA prenyltransferase family. Protoheme IX farnesyltransferase subfamily.

The protein localises to the cell inner membrane. The catalysed reaction is heme b + (2E,6E)-farnesyl diphosphate + H2O = Fe(II)-heme o + diphosphate. Its pathway is porphyrin-containing compound metabolism; heme O biosynthesis; heme O from protoheme: step 1/1. Functionally, converts heme B (protoheme IX) to heme O by substitution of the vinyl group on carbon 2 of heme B porphyrin ring with a hydroxyethyl farnesyl side group. This is Protoheme IX farnesyltransferase from Xanthomonas oryzae pv. oryzae (strain MAFF 311018).